Here is a 1792-residue protein sequence, read N- to C-terminus: D-lysergyl-peptide-synthetase subunit 3 (1792 aa).

An adenylation (A) domain region spans residues 239-642; that stretch reads FRQRCDLHPN…GRKDSQIKIR (404 aa). Residues 779 to 853 enclose the Carrier domain; that stretch reads SNEEHRLQRM…DLARKASQSV (75 aa). At S813 the chain carries O-(pantetheine 4'-phosphoryl)serine. Residues 895–1285 form a condensation (C) domain region; the sequence is EDIYPCTPMQ…HILGQIHGKE (391 aa). The interval 1415-1640 is reductase (R) domain; sequence VTGANGFIGT…AGEFNSSAGS (226 aa).

Belongs to the NRP synthetase family.

It participates in alkaloid biosynthesis; ergot alkaloid biosynthesis. Its function is as follows. D-lysergyl-peptide-synthetase subunit 3; part of the gene cluster that mediates the biosynthesis of fungal ergot alkaloid. DmaW catalyzes the first step of ergot alkaloid biosynthesis by condensing dimethylallyl diphosphate (DMAP) and tryptophan to form 4-dimethylallyl-L-tryptophan. The second step is catalyzed by the methyltransferase easF that methylates 4-dimethylallyl-L-tryptophan in the presence of S-adenosyl-L-methionine, resulting in the formation of 4-dimethylallyl-L-abrine. The catalase easC and the FAD-dependent oxidoreductase easE then transform 4-dimethylallyl-L-abrine to chanoclavine-I which is further oxidized by easD in the presence of NAD(+), resulting in the formation of chanoclavine-I aldehyde. Agroclavine dehydrogenase easG then mediates the conversion of chanoclavine-I aldehyde to agroclavine via a non-enzymatic adduct reaction: the substrate is an iminium intermediate that is formed spontaneously from chanoclavine-I aldehyde in the presence of glutathione. The presence of easA is not required to complete this reaction. Further conversion of agroclavine to paspalic acid is a two-step process involving oxidation of agroclavine to elymoclavine and of elymoclavine to paspalic acid, the second step being performed by the elymoclavine oxidase cloA. Paspalic acid is then further converted to D-lysergic acid. Ergopeptines are assembled from D-lysergic acid and three different amino acids by the D-lysergyl-peptide-synthetases composed each of a monomudular and a trimodular nonribosomal peptide synthetase subunit. LpsB and lpsC encode the monomodular subunits responsible for D-lysergic acid activation and incorporation into the ergopeptine backbone. LpsA1 and A2 subunits encode the trimodular nonribosomal peptide synthetase assembling the tripeptide portion of ergopeptines. LpsA1 is responsible for formation of the major ergopeptine, ergotamine, and lpsA2 for alpha-ergocryptine, the minor ergopeptine of the total alkaloid mixture elaborated by C.purpurea. D-lysergyl-tripeptides are assembled by the nonribosomal peptide synthetases and released as N-(D-lysergyl-aminoacyl)-lactams. Cyclolization of the D-lysergyl-tripeptides is performed by the Fe(2+)/2-ketoglutarate-dependent dioxygenase easH which introduces a hydroxyl group into N-(D-lysergyl-aminoacyl)-lactam at alpha-C of the aminoacyl residue followed by spontaneous condensation with the terminal lactam carbonyl group. The polypeptide is D-lysergyl-peptide-synthetase subunit 3 (Claviceps purpurea (strain 20.1) (Ergot fungus)).